The chain runs to 382 residues: Carbamoyl phosphate synthase small chain (382 aa).

A CPSase region spans residues 1 to 189 (MIKSALLVLE…ELPAAKNESE (189 aa)). L-glutamine contacts are provided by Ser-47, Gly-241, and Gly-243. Positions 193–380 (HVVAYDYGVK…IDLIQTYRSS (188 aa)) constitute a Glutamine amidotransferase type-1 domain. Cys-269 serves as the catalytic Nucleophile. Leu-270, Gln-273, Asn-311, Gly-313, and Phe-314 together coordinate L-glutamine. Residues His-353 and Glu-355 contribute to the active site.

Belongs to the CarA family. As to quaternary structure, composed of two chains; the small (or glutamine) chain promotes the hydrolysis of glutamine to ammonia, which is used by the large (or ammonia) chain to synthesize carbamoyl phosphate. Tetramer of heterodimers (alpha,beta)4.

It catalyses the reaction hydrogencarbonate + L-glutamine + 2 ATP + H2O = carbamoyl phosphate + L-glutamate + 2 ADP + phosphate + 2 H(+). It carries out the reaction L-glutamine + H2O = L-glutamate + NH4(+). It functions in the pathway amino-acid biosynthesis; L-arginine biosynthesis; carbamoyl phosphate from bicarbonate: step 1/1. It participates in pyrimidine metabolism; UMP biosynthesis via de novo pathway; (S)-dihydroorotate from bicarbonate: step 1/3. Its function is as follows. Small subunit of the glutamine-dependent carbamoyl phosphate synthetase (CPSase). CPSase catalyzes the formation of carbamoyl phosphate from the ammonia moiety of glutamine, carbonate, and phosphate donated by ATP, constituting the first step of 2 biosynthetic pathways, one leading to arginine and/or urea and the other to pyrimidine nucleotides. The small subunit (glutamine amidotransferase) binds and cleaves glutamine to supply the large subunit with the substrate ammonia. This Pectobacterium atrosepticum (strain SCRI 1043 / ATCC BAA-672) (Erwinia carotovora subsp. atroseptica) protein is Carbamoyl phosphate synthase small chain.